The sequence spans 478 residues: Probable glycine dehydrogenase (decarboxylating) subunit 2 (478 aa).

Lys-264 carries the post-translational modification N6-(pyridoxal phosphate)lysine.

It belongs to the GcvP family. C-terminal subunit subfamily. In terms of assembly, the glycine cleavage system is composed of four proteins: P, T, L and H. In this organism, the P 'protein' is a heterodimer of two subunits. Requires pyridoxal 5'-phosphate as cofactor.

The enzyme catalyses N(6)-[(R)-lipoyl]-L-lysyl-[glycine-cleavage complex H protein] + glycine + H(+) = N(6)-[(R)-S(8)-aminomethyldihydrolipoyl]-L-lysyl-[glycine-cleavage complex H protein] + CO2. Its function is as follows. The glycine cleavage system catalyzes the degradation of glycine. The P protein binds the alpha-amino group of glycine through its pyridoxal phosphate cofactor; CO(2) is released and the remaining methylamine moiety is then transferred to the lipoamide cofactor of the H protein. This chain is Probable glycine dehydrogenase (decarboxylating) subunit 2, found in Endomicrobium trichonymphae.